Reading from the N-terminus, the 455-residue chain is Probable galactarate/D-glucarate transporter GudP (455 aa).

Transmembrane regions (helical) follow at residues 19–39, 59–79, 87–107, 108–128, 153–173, 177–197, 253–273, 289–309, 320–340, 348–368, 386–406, and 414–434; these read WFIV…RATL, YVFS…GWLL, IIAL…AIGF, FSAG…GLSE, AFFN…MGWL, FGWH…AVIW, IGVY…LTWF, GFVA…GGIV, LTFA…SMIV, WLVV…ALGW, LFNT…GYIV, and GALV…LLLV.

The protein belongs to the major facilitator superfamily. Phthalate permease family.

The protein resides in the cell membrane. The catalysed reaction is galactarate(in) + H(+)(in) = galactarate(out) + H(+)(out). It carries out the reaction D-glucarate(in) + H(+)(in) = D-glucarate(out) + H(+)(out). Its function is as follows. Probably involved in the uptake of galactarate and/or D-glucarate. This is Probable galactarate/D-glucarate transporter GudP from Bacillus subtilis (strain 168).